We begin with the raw amino-acid sequence, 207 residues long: MIOREX complex component 11 (207 aa).

A mitochondrion-targeting transit peptide spans 1–46 (MTVMNLFFRPCQLQMGSGPLELMLKRPTQLTTFMNTRPGGSTQIRF). The Mitochondrial matrix segment spans residues 47–98 (ISGNLDPVKRREDRLRKIFSKSRLLTRLNKNPKFSHYFDRLSEAGTVPTLTS). The helical transmembrane segment at 99-119 (FFILHEVTAILPLFLLWWLLY) threads the bilayer. Residues 120-177 (NLDLSDDFKLPNFLNGLMDSCHTAMEKFVGKRYQECLNKNKLILSGTVAYVTVKLLYP) are Mitochondrial intermembrane-facing. The helical transmembrane segment at 178-198 (VRIFISIWGAPYFGKWLLLPF) threads the bilayer. Residues 199 to 207 (QKLKHLIKK) are Mitochondrial matrix-facing.

It belongs to the MRX11 family. As to quaternary structure, associates with the mitochondrial ribosome.

It localises to the mitochondrion. Its subcellular location is the mitochondrion inner membrane. Functionally, component of MIOREX complexes, large expressome-like assemblies of ribosomes with factors involved in all the steps of post-transcriptional gene expression. This Saccharomyces cerevisiae (strain ATCC 204508 / S288c) (Baker's yeast) protein is MIOREX complex component 11.